The sequence spans 929 residues: Urea transporter 2 (929 aa).

The segment covering 1–11 (MSDHPLKEMSD) has biased composition (basic and acidic residues). The segment at 1–89 (MSDHPLKEMS…KRRESELPRR (89 aa)) is disordered. Residues 31–42 (SELSSPTWPSSS) are compositionally biased toward low complexity. The segment covering 55–88 (PEEKDLRSSDEDSHIVKIEKPNERSKRRESELPR) has biased composition (basic and acidic residues). The next 9 membrane-spanning stretches (helical) occupy residues 133-155 (GAAQ…GLLI), 162-179 (IAGA…LALS), 184-204 (AIAS…VAVF), 212-232 (WWLL…SSAL), 241-261 (LPVF…ATGH), 310-330 (GGVI…HAAI), 349-371 (IYTG…MFYV), 378-399 (LLAL…NMMA), and 400-420 (VVGV…FLLL). The tract at residues 451 to 480 (SDEQKPPNGGGGEQSHGGGQRKAEEGSETV) is disordered. The span at 458–470 (NGGGGEQSHGGGQ) shows a compositional bias: gly residues. A Phosphoserine modification is found at S486. Transmembrane regions (helical) follow at residues 609-629 (GILI…SGCL), 647-667 (AIAA…MAVF), 675-695 (WWLL…SSAL), and 704-724 (LPVF…ATGH). N742 is a glycosylation site (N-linked (GlcNAc...) asparagine). 4 helical membrane passes run 773–793 (GGIF…HAAI), 812–832 (IYFG…GGMF), 841–861 (LLAI…ANML), and 863–883 (VFGL…FLLL).

The protein belongs to the urea transporter family. As to quaternary structure, interacts with SNAPIN which enhances its urea transport activity. As to expression, expressed in the inner medulla of the kidney. Expressed in both the inner and outer renal medulla of the kidney.

It is found in the apical cell membrane. It localises to the cell membrane. The enzyme catalyses urea(in) = urea(out). With respect to regulation, inhibited by phloretin. Activated by vasopressin, forskolin, 3-isobutyl-1-methylxanthine (IBMX) and cAMP. Inhibited by phloretin. Its activity is regulated as follows. Inhibited by urea analogs and phloretin and activated by forskolin. With respect to regulation, inhibited by phloretin and activated by forskolin. In terms of biological role, mediates the transport of urea driven by a concentration gradient across the cell membrane of the kidney inner medullary collecting duct which is critical to the urinary concentrating mechanism. This chain is Urea transporter 2 (Slc14a2), found in Rattus norvegicus (Rat).